Consider the following 860-residue polypeptide: Elastin (860 aa).

Positions 1 to 27 (MAGLTAVVPQPGVLLILLLNLLHPAQP) are cleaved as a signal peptide. A 4-hydroxyproline mark is found at proline 35 and proline 72. At proline 84 the chain carries Hydroxyproline. A 4-hydroxyproline modification is found at proline 105. Residues lysine 123 and lysine 127 each carry the allysine modification. 4-hydroxyproline occurs at positions 217, 230, 233, and 253. Residues lysine 299, lysine 318, and lysine 321 each carry the allysine modification. The residue at position 346 (proline 346) is a 4-hydroxyproline. Allysine is present on residues lysine 368 and lysine 371. The residue at position 383 (proline 383) is a Hydroxyproline. 2 positions are modified to 4-hydroxyproline: proline 399 and proline 405. Residues proline 410 and proline 415 each carry the hydroxyproline modification. Lysine 431, lysine 435, lysine 438, lysine 481, and lysine 484 each carry allysine. 4-hydroxyproline is present on residues proline 498 and proline 519. Residues lysine 534, lysine 595, lysine 599, and lysine 603 each carry the allysine modification. 5 positions are modified to 4-hydroxyproline: proline 617, proline 626, proline 644, proline 653, and proline 661. An allysine mark is found at lysine 668 and lysine 671. Proline 702 is modified (4-hydroxyproline). Allysine occurs at positions 719, 723, 783, and 786. Proline 832 carries the post-translational modification 4-hydroxyproline. Cysteine 850 and cysteine 855 are oxidised to a cystine.

The protein belongs to the elastin family. In terms of assembly, the polymeric elastin chains are cross-linked together into an extensible 3D network. Forms a ternary complex with BGN and MFAP2. Interacts with MFAP2 via divalent cations (calcium &gt; magnesium &gt; manganese) in a dose-dependent and saturating manner. Interacts with FBLN5 and FBN1. Forms a ternary complex with FBN1 and FBLN2 or FBLN5. Interacts with MFAP4 in a Ca (2+)-dependent manner; this interaction promotes ELN self-assembly. Interacts with EFEMP2 with moderate affinity. Post-translationally, elastin is formed through the cross-linking of its soluble precursor tropoelastin. Cross-linking is initiated through the action of lysyl oxidase on exposed lysines to form allysine. Subsequent spontaneous condensation reactions with other allysine or unmodified lysine residues result in various bi-, tri-, and tetrafunctional cross-links. The most abundant cross-links in mature elastin fibers are lysinonorleucine, allysine aldol, desmosine, and isodesmosine. Hydroxylation on proline residues within the sequence motif, GXPG, is most likely to be 4-hydroxy as this fits the requirement for 4-hydroxylation in vertebrates.

The protein localises to the secreted. It is found in the extracellular space. The protein resides in the extracellular matrix. Its function is as follows. Major structural protein of tissues such as aorta and nuchal ligament, which must expand rapidly and recover completely. Molecular determinant of the late arterial morphogenesis, stabilizing arterial structure by regulating proliferation and organization of vascular smooth muscle. The sequence is that of Elastin (Eln) from Mus musculus (Mouse).